Consider the following 716-residue polypeptide: Cyclic nucleotide-gated ion channel 1 (716 aa).

Residues M1–K97 are Cytoplasmic-facing. The chain crosses the membrane as a helical span at residues I98 to I118. The Extracellular segment spans residues I119 to M132. The chain crosses the membrane as a helical span at residues E133–F153. Residues Q154–H187 are Cytoplasmic-facing. Residues F188–P208 form a helical membrane-spanning segment. Residues H209 to N220 lie on the Extracellular side of the membrane. The chain crosses the membrane as a helical span at residues M221 to Y241. Over K242 to A259 the chain is Cytoplasmic. A helical transmembrane segment spans residues A260 to F280. Residues S281–I379 lie on the Extracellular side of the membrane. A helical membrane pass occupies residues W380 to I400. Residues G401–D716 lie on the Cytoplasmic side of the membrane. Residues M486–L610 and E557 each bind a nucleoside 3',5'-cyclic phosphate. The tract at residues F602 to Y617 is calmodulin-binding. Residues K622–R651 form the IQ domain. A disordered region spans residues S689–D716.

This sequence belongs to the cyclic nucleotide-gated cation channel (TC 1.A.1.5) family. In terms of assembly, homotetramer or heterotetramer (Potential). Binds calmodulin-2/3/5 with a higher affinity than calmodulin-1/4. Expressed in the whole plant but only weakly in roots.

The protein resides in the cell membrane. Its function is as follows. Acts as a cyclic nucleotide-gated ion channel. Can be activated by cyclic AMP which leads to an opening of the cation channel. May be responsible for cAMP-induced calcium entry in cells and thus should be involved in the calcium signal transduction. Could transport K(+), Na(+) and Pb(2+). The chain is Cyclic nucleotide-gated ion channel 1 (CNGC1) from Arabidopsis thaliana (Mouse-ear cress).